The primary structure comprises 461 residues: Homocitrate synthase (461 aa).

In terms of domain architecture, Pyruvate carboxyltransferase spans 4 to 259 (VGILDSTLRE…IEVVKLDKLQ (256 aa)). R12 provides a ligand contact to 2-oxoglutarate. E13 is a binding site for Mg(2+). 2-oxoglutarate-binding residues include H76, R136, and T170. H198 and H200 together coordinate Mg(2+). H292 acts as the Proton acceptor in catalysis.

This sequence belongs to the alpha-IPM synthase/homocitrate synthase family. Homocitrate synthase LYS20/LYS21 subfamily. Mg(2+) is required as a cofactor. Requires Mn(2+) as cofactor.

The catalysed reaction is acetyl-CoA + 2-oxoglutarate + H2O = (2R)-homocitrate + CoA + H(+). The protein operates within amino-acid biosynthesis; L-lysine biosynthesis via AAA pathway; L-alpha-aminoadipate from 2-oxoglutarate: step 1/5. Functionally, catalyzes the aldol-type condensation of 2-oxoglutarate with acetyl-CoA to yield homocitrate. Carries out the first step of the alpha-aminoadipate (AAA) lysine biosynthesis pathway. In Saccharolobus solfataricus (strain ATCC 35092 / DSM 1617 / JCM 11322 / P2) (Sulfolobus solfataricus), this protein is Homocitrate synthase.